Consider the following 115-residue polypeptide: Nucleoid-associated protein Pro_0020 (115 aa).

It belongs to the YbaB/EbfC family. Homodimer.

The protein resides in the cytoplasm. Its subcellular location is the nucleoid. Functionally, binds to DNA and alters its conformation. May be involved in regulation of gene expression, nucleoid organization and DNA protection. The chain is Nucleoid-associated protein Pro_0020 from Prochlorococcus marinus (strain SARG / CCMP1375 / SS120).